A 909-amino-acid chain; its full sequence is Alanine--tRNA ligase (909 aa).

Positions 600, 604, 704, and 708 each coordinate Zn(2+).

Belongs to the class-II aminoacyl-tRNA synthetase family. The cofactor is Zn(2+).

The protein resides in the cytoplasm. The catalysed reaction is tRNA(Ala) + L-alanine + ATP = L-alanyl-tRNA(Ala) + AMP + diphosphate. Catalyzes the attachment of alanine to tRNA(Ala) in a two-step reaction: alanine is first activated by ATP to form Ala-AMP and then transferred to the acceptor end of tRNA(Ala). Also edits incorrectly charged Ser-tRNA(Ala) and Gly-tRNA(Ala) via its editing domain. The sequence is that of Alanine--tRNA ligase from Staphylothermus marinus (strain ATCC 43588 / DSM 3639 / JCM 9404 / F1).